The sequence spans 465 residues: Protein Loquacious (465 aa).

The tract at residues 1-337 is necessary for enhancing pre-miRNA processing by Dcr-1; sequence MDQENFHGSS…DSICGELEGE (337 aa). The segment at 1–379 is not required for interaction with Dcr-1; that stretch reads MDQENFHGSS…TLKNATGKKL (379 aa). An important for homodimerization and interaction with Dcr-1 region spans residues 1 to 392; the sequence is MDQENFHGSS…QKTCLKNNKI (392 aa). The interval 129–211 is sufficient for binding RNA; sequence NGLAMKTPVS…DKLIGAQLPE (83 aa). The segment at 129-322 is necessary for promoting preferential binding of Dcr-2 to the less stably base paired ends of siRNAs; sequence NGLAMKTPVS…WMRLQETPID (194 aa). A DRBM 1 domain is found at 135–206; that stretch reads TPVSILQELL…ARALIDKLIG (72 aa). Residues 209–249 form an enables simultaneous binding of both DRBM 1 and 2 domains to dsRNA region; the sequence is LPESPSSSAGPSVTGLTVAGSGGDGNANATGGGDASDKTVG. The tract at residues 210–246 is disordered; sequence PESPSSSAGPSVTGLTVAGSGGDGNANATGGGDASDK. The segment covering 211–223 has biased composition (polar residues); that stretch reads ESPSSSAGPSVTG. The tract at residues 220 to 465 is necessary and sufficient for enhancing processing of pre-miRNAs by Dcr-1; that stretch reads SVTGLTVAGS…LEYLKIMTKK (246 aa). Over residues 228-242 the composition is skewed to gly residues; the sequence is GSGGDGNANATGGGD. The segment at 245–322 is sufficient for binding RNA; that stretch reads DKTVGNPIGW…WMRLQETPID (78 aa). The DRBM 2 domain occupies 250 to 318; that stretch reads NPIGWLQEMC…AHRMWMRLQE (69 aa). Residues 308–309 form a necessary for binding pre-miRNA region; it reads AA. A required for binding to Dcr-2 and to fully enhance Dcr-2 mediated cleavage of 3' overhanging termini (3'ovr) and blunt termini (BLT) dsRNAs. However, this region is dispensable for binding the dsRNA substrates region spans residues 338 to 359; it reads PRSSENYYGELKDISVPTLTTQ. Residues 340-465 are necessary for interaction with Dcr-1; that stretch reads SSENYYGELK…LEYLKIMTKK (126 aa). Residues 392-463 form a sufficent for binding to Dcr-1 region; that stretch reads IDYIKLLGEI…NALEYLKIMT (72 aa). The region spanning 393 to 461 is the DRBM 3 domain; it reads DYIKLLGEIA…AQNALEYLKI (69 aa).

Homodimer. As to quaternary structure, interacts with dicer enzyme Dcr-1. In terms of assembly, component of the miRNA-directed RNA-induced loading complex (miRLC), composed of at least Dcr-1, AGO1 and loqs isoform PB (loqs-PB), which processes pre-miRNAs and loads the resulting miRNAs into the Argonaute 1 (AGO1)-containing RNA-induced silencing complex (miRISC) to target the selective destruction of homologous RNAs. Interacts (via DRBM 3 domain) with dicer enzyme Dcr-1 (via helicase domain). Different regions of the Dcr-1-loqs-PB heterodimer collaborate to recognize, bind and position the pre-miRNA for Dcr-1 mediated cleavage. In the absence of miRNA substrates, the heterodimer favors a closed, catalytically incompetent, conformation, whereas binding of authentic pre-miRNA substrates stabilizes the relatively rare open, catalytically competent, conformation of the heterodimer. During substrate recognition, the Dcr-1 PAZ domain and pre-miRNA interact with the DRBM 1 domain of loqs-PB, which likely contributes to substrate recognition and stabilization. At the miRNA binding stage, the Dcr-1 DRBM domain and the loqs-PB DRBM domains then bind the pre-miRNA in tandem to form a tight 'belt' around the pre-miRNA stem, the pre-miRNA loop is docked in the loop-binding region formed by DUF283, DRBM and part of the helicase domain of Dcr-1, and the loqs-PB DRBM 1 and the wing domain of Dcr-1 act together to bind the 5' and 3' pre-miRNA termini within the PAZ and platform domains of Dcr-1. These interactions between the proteins and their pre-miRNA substrate stabilize a distorted form of the pre-miRNA and position the scissile phosphodiester bonds of the pre-miRNA at the RNase III catalytic cleavage sites of Dcr-1. Following Dcr-1 mediated cleavage, the miRNA duplex remains bound to loqs-PB DRBM 1, which dissociates from the Dcr-1 RNase III 1 domain but remains in contact with the PAZ and wing domains suggesting that the heterodimer presents the mature miRNA to AGO2 for loading into the RNA-induced silencing complex (miRISC). Able to interact with dicer enzyme Dcr-1. However, the relevance of such an interaction is unclear in vivo and another report found that it did not interact with Dcr-1. As to quaternary structure, monomer. Interacts (via C-terminus) with dicer enzyme Dcr-2 (via N-terminus); interaction is required for RNAi activity in producing siRNAs from a subset of endo- and exo-dsRNAs, and in the alternative siRLC, the interaction enhances the binding preference of the protein for the thermodynamically more stable ends of endogenous siRNAs. Interaction with Dcr-2 is RNA independent, however the isoform must bind both dsRNA and Dcr-2 to enhance Dcr-2 cleavage activity. Does not interact with Dcr-1. As to expression, strong expression in males and females. Expression in ovaries is relatively weak. In terms of tissue distribution, strong expression in females and relatively weak expression in males. Strong expression in ovaries.

The protein resides in the cytoplasm. It is found in the cytosol. In terms of biological role, double-stranded RNA-binding protein which can function in gene silencing by acting with Dcr-1 to enhance its ATP-independent processing of a specific subset of precursor micro-RNAs (pre-miRNAs) to mature miRNAs. Some reports found it was able to enhance the efficiency of pre-miRNA processing by Dcr-1, and can shift the cleavage site of Dcr-1 altering the length of the mature miRNAs produced by Dcr-1 alone. However, in contrast to isoform PB, it is not necessary or sufficient for enhancing miRNA biogenesis, and is not required for development or female germline stem cell (GSC) maintenance. Another report also found that it decreases binding of Dcr-1 to the miRNA substrate let-7. Functionally, double-stranded RNA-binding protein which functions in gene silencing by acting with Dcr-1 to enhance its ATP-independent processing of a specific subset of precursor micro-RNAs (pre-miRNAs) to mature miRNAs. Function is essential for development and female germline stem cell (GSC) maintenance. Functions in miRNA-mediated gene silencing by enhancing the binding affinity and specific pre-miRNA processing activity of Dcr-1, and as part of the loqs-PB-Dcr-1 complex, is involved in substrate discrimination, correctly positioning the pre-miRNA in the Dcr-1 catalytic center for cleavage, and miRNA loading into the Argonaute 1 (Ago1)-containing RNA-induced silencing complex (miRISC). Increases the binding affinity of Dcr-1 to pre-miRNAs, thereby increasing dicing efficiency and broadening the range of substrates that can be processed by the dicer. It may also confer the substrate specificity of Dcr-1 towards pre-miRNAs, as in its absence Dcr-1 displays siRNA-generating activity towards long dsRNA substrates. It can also shift the cleavage site of Dcr-1 for a small number of pre-miRNAs, changing the length of the mature miRNAs produced by Dcr-1 alone. Increases the range of pre-miRNAs that can be processed by Dcr-1, by enhancing the dicing of suboptimal hairpin substrates including ones with mismatches at the dicing site. This function may also promote the generation of novel miRNA genes as it appears to have an important role in processing evolutionarily young miRNA genes, suggesting that it may also enhance dicing of substrates that have not acquired hairpin features required for efficient miRNA processing. As newly emerged miRNAs can have deleterious or beneficial effects on fitness, this function is likely part of a regulatory system that prevents excessive emergence of active miRNA genes and thus keeps them within an optimal range. Also forms a RISC loading complex (miRLC) with Dcr-1 to mediate Ago1-loading of mature miRNAs into the RNA-induced silencing complex (miRISC). In female ovaries, required for Dcr-1 to generate the twenty-three nucleotide isomiR variant of miR-307a which is able to repress its targets Gk2 and tara. Its function is as follows. Double-stranded RNA-binding protein which has an essential role in gene silencing (RNAi) by acting with Dcr-2 to enhance its ATP-dependent processing of a subset of endogenous (endo) and exogenous (exo) dsRNAs into short interfering RNAs (siRNAs). Functions in RNAi by increasing the initial binding affinity of Dcr-2 to certain dsRNA substrates, and in the absence of r2d2, may also function in siRNA loading into the Argonaute 2 (AGO2)-containing RNA-induced silencing complex (siRISC) and guide strand selection for target silencing by the siRISC. Promotes Dcr-2 cleavage of a subset of dsRNAs, including endo-dsRNAs derived from convergent transcription, inverted repeats and transposons. Also enables Dcr-2 to produce hairpin-derived endo-siRNAs in the presence of cellular inhibitory inorganic phosphate, likely by increasing the binding affinity of the enzyme to the hairpin dsRNAs allowing the dsRNA to displace phosphate bound to Dcr-2. According to many reports, the cleavage reaction mode of Dcr-2 changes according to the termini of the dsRNA substrate, with the enzyme displaying a preference for processing blunt termini (BLT), likely non-self dsRNAs, over dsRNAs with 2 nucleotides 3' overhanging (3'ovr) termini, which are typically the structure of endo-dsRNAs. According to many reports, interaction with Loqs-PD modifies the molecular recognition mechanisms of Dcr-2 towards sub-optimal 3'ovr dsRNA substrates and thus enables the dicer to cleave endo-dsRNA templates with diverse termini. However, according to another report, the mode of cleavage reaction is not affected by the presence or absence of loqs-PD. In the absence of r2d2, may also form an alternative RISC loading complex (siRLC) with Dcr-2 to mediate AGO2-loading of endo- and exo-siRNAs into the RNA-induced silencing complex (siRISC). Many reports suggest that loqs-PD and r2d2 function independently with dcr-2 in distinct siRNA pathways, and may even compete for binding to the enzyme. Loaded siRNAs serve as a guide to direct the siRISC to complementary RNAs to degrade them or prevent their translation. The siRLC plays an important role in the ATP-dependent asymmetry sensing of the duplex, and is therefore also responsible for the selection of the strand that ultimately acts as the guide siRNA for the siRISC. Thermodynamically asymmetric endo-siRNAs can be pre-oriented in the siRLC by the Loqs-PD and DCr-2 complex, which preferentially binds to the most thermodynamically stable strand prior to loading into the siRISC. Appears to be involved in promoting double-strand breaks (DSBs) following exposure to a low-dose/dose-rate (LDR) of ionizing radiation. In Drosophila melanogaster (Fruit fly), this protein is Protein Loquacious.